Consider the following 416-residue polypeptide: Gamma-glutamyl phosphate reductase (416 aa).

This sequence belongs to the gamma-glutamyl phosphate reductase family.

The protein localises to the cytoplasm. It carries out the reaction L-glutamate 5-semialdehyde + phosphate + NADP(+) = L-glutamyl 5-phosphate + NADPH + H(+). It participates in amino-acid biosynthesis; L-proline biosynthesis; L-glutamate 5-semialdehyde from L-glutamate: step 2/2. Functionally, catalyzes the NADPH-dependent reduction of L-glutamate 5-phosphate into L-glutamate 5-semialdehyde and phosphate. The product spontaneously undergoes cyclization to form 1-pyrroline-5-carboxylate. The polypeptide is Gamma-glutamyl phosphate reductase (Salmonella agona (strain SL483)).